A 653-amino-acid chain; its full sequence is Threonine--tRNA ligase (653 aa).

The region spanning 1–61 (MIKITFPDGN…NEDAEVKLFK (61 aa)) is the TGS domain. The tract at residues 243–542 (DHRKIGKELE…LIEHTAGKFP (300 aa)) is catalytic. Zn(2+)-binding residues include Cys338, His389, and His519.

It belongs to the class-II aminoacyl-tRNA synthetase family. As to quaternary structure, homodimer. The cofactor is Zn(2+).

The protein localises to the cytoplasm. It carries out the reaction tRNA(Thr) + L-threonine + ATP = L-threonyl-tRNA(Thr) + AMP + diphosphate + H(+). Catalyzes the attachment of threonine to tRNA(Thr) in a two-step reaction: L-threonine is first activated by ATP to form Thr-AMP and then transferred to the acceptor end of tRNA(Thr). Also edits incorrectly charged L-seryl-tRNA(Thr). This chain is Threonine--tRNA ligase, found in Porphyromonas gingivalis (strain ATCC BAA-308 / W83).